We begin with the raw amino-acid sequence, 465 residues long: tRNA modification GTPase MnmE (465 aa).

3 residues coordinate (6S)-5-formyl-5,6,7,8-tetrahydrofolate: Arg-21, Glu-85, and Lys-124. The TrmE-type G domain maps to 220-387 (GVPVAIIGET…LQKMLINAAH (168 aa)). Position 230 (Asn-230) interacts with K(+). GTP-binding positions include 230–235 (NAGKST), 249–255 (SDIHGTT), 274–277 (DTAG), and 337–340 (NKAD). Position 234 (Ser-234) interacts with Mg(2+). Positions 249, 251, and 254 each coordinate K(+). Thr-255 contacts Mg(2+). Position 465 (Lys-465) interacts with (6S)-5-formyl-5,6,7,8-tetrahydrofolate.

Belongs to the TRAFAC class TrmE-Era-EngA-EngB-Septin-like GTPase superfamily. TrmE GTPase family. Homodimer. Heterotetramer of two MnmE and two MnmG subunits. The cofactor is K(+).

The protein resides in the cytoplasm. Exhibits a very high intrinsic GTPase hydrolysis rate. Involved in the addition of a carboxymethylaminomethyl (cmnm) group at the wobble position (U34) of certain tRNAs, forming tRNA-cmnm(5)s(2)U34. This Bacteroides thetaiotaomicron (strain ATCC 29148 / DSM 2079 / JCM 5827 / CCUG 10774 / NCTC 10582 / VPI-5482 / E50) protein is tRNA modification GTPase MnmE.